The following is a 336-amino-acid chain: Heme A synthase (336 aa).

8 consecutive transmembrane segments (helical) span residues 5 to 25 (LTRWLLTCCIMVVAMIIVGGI), 92 to 112 (GRATGLIYILPLIYFYFKGII), 117 to 137 (ILSYIIVLLLFCVQGFMGWYM), 153 to 173 (LAFHLIIAVIIYHLLFYKLVK), 191 to 211 (LIFSVAAIAMIYVQIFLGALV), 253 to 273 (FIHRLGAYSLSIIVIALIISL), 284 to 304 (VAFYLSIALLIQLSTGVITLL), and 307 to 327 (VPIIAASMHQFFAIVLLSVVI). Position 255 (histidine 255) interacts with heme. A heme-binding site is contributed by histidine 315.

Belongs to the COX15/CtaA family. Type 2 subfamily. As to quaternary structure, interacts with CtaB. Requires heme b as cofactor.

It is found in the cell membrane. It carries out the reaction Fe(II)-heme o + 2 A + H2O = Fe(II)-heme a + 2 AH2. The protein operates within porphyrin-containing compound metabolism; heme A biosynthesis; heme A from heme O: step 1/1. In terms of biological role, catalyzes the conversion of heme O to heme A by two successive hydroxylations of the methyl group at C8. The first hydroxylation forms heme I, the second hydroxylation results in an unstable dihydroxymethyl group, which spontaneously dehydrates, resulting in the formyl group of heme A. The sequence is that of Heme A synthase from Rickettsia bellii (strain RML369-C).